The primary structure comprises 825 residues: MNSTEISEDVEEVLKNNPVKAEGSDATLDCSRNSRASEKHLLESVLTALHDSSKRKQLDSDGQPDSVPSVKRRRLIPEALLAGMRTRENSSPCQGNGEPASRGRSGSCAWPAEEEPSTEATVPSYKKPLYGISHKIMEKKNPPSGDLLSPYELFEKANSSSGPSPLRLLSESQKRECGVGVATDGDLNIYFLIQKMFYMLNGLTTNMSQLHSKMDLLSLEVSRVKKQVSPSELVAKFQPPPEYQLTASELKQIAEQSLSCGDLACRLLLQLFPELFSDVDFSRGCSACGFAAKRKLESLHLQLIRNYVEVYYPNVKDTAVWQAECLPQLNDFFSRFWAQREMEDSQPGGQVTNFFEADQVDAGHFLDNKDQEEALSLDRSSTIASDHVVDTQDLTEFLDEASSPGEFAVFLLHRLFPELFDHRKLGEQYSCYGDGGKQELDPQRLQIIRNYTEIYFPDMQEEEAWLQQCAQRINDELEGLGLEGGSEGEAPRDDCYDSSSLPDDISVVKVEDNFEGERPGRRSKKIWLVPIDFDKLEIPQPDFEMPGSDCLLSKEQLRSIYESSLSIGNFASRLLVHLFPELFTHENLRKQYNCSGSLGKKQLDPARIRLIRHYVQLLYPRAKNDRVWTLEFVGKLDERCRRRDTEQRRSYQQQRKVHVPGPECRDLASYAINPERFREEFEGPPLPPERSSKDFCKIPLDELVVPSPDFPVPSPYLLSDKEVREIVQQSLSVGNFAARLLVRLFPELFTTENLRLQYNHSGACNKKQLDPTRLRLIRHYVEAVYPVEKMEEVWHYECIPSIDERCRRPNRKKCDILKKAKKVEK.

The segment covering 1-11 (MNSTEISEDVE) has biased composition (acidic residues). The interval 1-35 (MNSTEISEDVEEVLKNNPVKAEGSDATLDCSRNSR) is disordered. Lysine 20 participates in a covalent cross-link: Glycyl lysine isopeptide (Lys-Gly) (interchain with G-Cter in SUMO); alternate. A Glycyl lysine isopeptide (Lys-Gly) (interchain with G-Cter in SUMO1); alternate cross-link involves residue lysine 20. Lysine 20 is covalently cross-linked (Glycyl lysine isopeptide (Lys-Gly) (interchain with G-Cter in SUMO2); alternate). Glycyl lysine isopeptide (Lys-Gly) (interchain with G-Cter in SUMO2) cross-links involve residues lysine 39, lysine 54, lysine 56, lysine 71, lysine 126, lysine 127, lysine 135, lysine 140, lysine 156, and lysine 174. The disordered stretch occupies residues 52-122 (SSKRKQLDSD…EEEPSTEATV (71 aa)). The short motif at 54–56 (KRK) is the Nuclear localization signal element. One can recognise a BEN 1 domain in the interval 239–340 (PPPEYQLTAS…DFFSRFWAQR (102 aa)). Residue serine 376 is modified to Phosphoserine. In terms of domain architecture, BEN 2 spans 384–484 (ASDHVVDTQD…DELEGLGLEG (101 aa)). A Glycyl lysine isopeptide (Lys-Gly) (interchain with G-Cter in SUMO2) cross-link involves residue lysine 424. Residue serine 486 is modified to Phosphoserine. Lysine 509 is covalently cross-linked (Glycyl lysine isopeptide (Lys-Gly) (interchain with G-Cter in SUMO); alternate). Residue lysine 509 forms a Glycyl lysine isopeptide (Lys-Gly) (interchain with G-Cter in SUMO2); alternate linkage. A Glycyl lysine isopeptide (Lys-Gly) (interchain with G-Cter in SUMO2) cross-link involves residue lysine 525. In terms of domain architecture, BEN 3 spans 547-647 (GSDCLLSKEQ…ERCRRRDTEQ (101 aa)). Residue lysine 697 forms a Glycyl lysine isopeptide (Lys-Gly) (interchain with G-Cter in SUMO2) linkage. Residues 712-813 (VPSPYLLSDK…ERCRRPNRKK (102 aa)) enclose the BEN 4 domain.

As to quaternary structure, homooligomer, probably a homooctamer. Interacts with HDAC2 and HDAC3, but not HDAC1. Interacts with SALL4. Interacts with SMARCA5/SNF2H, BAZ2A/TIP5 and USP21. Interacts with the nucleosome remodeling and histone deacetylase (NuRD) repressor complex. Interacts (via BEN domains 1 and 3) with ERCC6L (via N-terminal TPR repeat); the interaction is direct. In terms of processing, sumoylated at Lys-20 by SUMO1 and at Lys-509 by SUMO1, SUMO2 and SUMO3. Sumoylation probably occurs sequentially, with that of Lys-20 preceding that of Lys-509. It does not alter association with heterochromatin, but is required for the repression of transcription.

It localises to the nucleus. The protein localises to the nucleolus. Functionally, transcriptional repressor which associates with the NoRC (nucleolar remodeling complex) complex and plays a key role in repressing rDNA transcription. The sumoylated form modulates the stability of the NoRC complex component BAZ2A/TIP5 by controlling its USP21-mediated deubiquitination. Binds to unmethylated major satellite DNA and is involved in the recruitment of the Polycomb repressive complex 2 (PRC2) to major satellites. Stimulates the ERCC6L translocase and ATPase activities. The sequence is that of BEN domain-containing protein 3 (Bend3) from Mus musculus (Mouse).